Reading from the N-terminus, the 212-residue chain is Transmembrane emp24 domain-containing protein p24delta4 (212 aa).

Positions 1–25 (MKKKMIPTTILLSALIFSLSPICEA) are cleaved as a signal peptide. Residues 26–179 (VWLTVPHTGS…RIVSEKTNSR (154 aa)) lie on the Lumenal side of the membrane. Positions 35-147 (SKCVSEEIQS…IEGVELEFKK (113 aa)) constitute a GOLD domain. A glycan (N-linked (GlcNAc...) asparagine) is linked at asparagine 82. Positions 133–155 (ARKEKIEGVELEFKKLEGAVEAI) form a coiled coil. 2 positions are modified to omega-N-methylated arginine: arginine 165 and arginine 170. The helical transmembrane segment at 180–200 (VAWYSIMSLGICIVVSGLQIL) threads the bilayer. At 201–212 (YLKQYFEKKKLI) the chain is on the cytoplasmic side. The COPII vesicle coat-binding motif lies at 205-206 (YF). The short motif at 205 to 212 (YFEKKKLI) is the COPI vesicle coat-binding element.

Belongs to the EMP24/GP25L family. As to quaternary structure, probably oligomerizes with other members of the EMP24/GP25L family. Associates with the COPI vesicle coat (coatomer). Associates with the COPII vesicle coat (coatomer).

The protein localises to the endoplasmic reticulum membrane. It localises to the golgi apparatus membrane. Involved in vesicular protein trafficking. Mainly functions in the early secretory pathway. Required for trafficking GLL23, a component of the PYK10 complex. May act as a receptor facilitating its packing into COPII carriers and export from the endoplasmic reticulum. This is Transmembrane emp24 domain-containing protein p24delta4 (CYB) from Arabidopsis thaliana (Mouse-ear cress).